The chain runs to 714 residues: Developmentally-regulated protein kinase 1 (714 aa).

Disordered regions lie at residues 88-122 (NNNISNNNNNNNNNNNNNNNNNNNNNNINNNNNFN) and 174-266 (CNMI…IINN). Composition is skewed to low complexity over residues 174–200 (CNMINNDNNNNNNNNNNNNNNNNNNNN), 209–227 (PSSNSTPSHSSPSSPTTSS), and 240–266 (NFNQQLQNNNNSNNNSNNNNNNNIINN). The region spanning 334–589 (FNFYGSLGSG…SCSIRNHKWF (256 aa)) is the Protein kinase domain. ATP-binding positions include 340 to 348 (LGSGSFGTA) and Lys363. Catalysis depends on Asp457, which acts as the Proton acceptor. Thr488 is modified (phosphothreonine).

Belongs to the protein kinase superfamily. AGC Ser/Thr protein kinase family.

The catalysed reaction is L-seryl-[protein] + ATP = O-phospho-L-seryl-[protein] + ADP + H(+). It carries out the reaction L-threonyl-[protein] + ATP = O-phospho-L-threonyl-[protein] + ADP + H(+). The protein is Developmentally-regulated protein kinase 1 (pkaD) of Dictyostelium discoideum (Social amoeba).